Here is a 424-residue protein sequence, read N- to C-terminus: UPF0053 protein MG146 (424 aa).

The region spanning 6–191 (SGLTLTVIIL…EQNGLFSKED (186 aa)) is the CNNM transmembrane domain. Transmembrane regions (helical) follow at residues 7-27 (GLTLTVIILSIILLAFISTVV), 71-91 (LITILITNNIVAIMVSNILFL), 101-121 (LLSSVLNLVVSGVLIVSFCEI), and 135-155 (LVLFAYLVYFFYLIFWPITKL). CBS domains follow at residues 210–270 (MIKW…PKSL) and 272–332 (LNQL…IYDE).

It belongs to the UPF0053 family.

The protein localises to the cell membrane. This is UPF0053 protein MG146 from Mycoplasma genitalium (strain ATCC 33530 / DSM 19775 / NCTC 10195 / G37) (Mycoplasmoides genitalium).